Consider the following 430-residue polypeptide: Palmitoyltransferase ZDHHC11 (430 aa).

The Cytoplasmic segment spans residues 1–46 (MTNLNCFGRHRRRTAPHNATGSRSELVAPPIHSRINGWSSPLHSFQ). Residues 47 to 67 (FIALLIFSFMAIVAFGIYVPL) traverse the membrane as a helical segment. Residues 68–76 (LPAPWSYAA) lie on the Lumenal side of the membrane. A helical transmembrane segment spans residues 77–97 (YALIGSAFVLHLFSHVTAVTI). At 98–176 (DPADVNVRRR…GGRNYWFFFT (79 aa)) the chain is on the cytoplasmic side. The DHHC domain occupies 129–179 (LHCTLCEVDVSPKAKHCSTCNKCIADFDHHCKWLNNCVGGRNYWFFFTAVS). The active-site S-palmitoyl cysteine intermediate is cysteine 159. Residues 177–197 (AVSSAVIGVILLIPLVLFVFI) traverse the membrane as a helical segment. Residues 198-234 (EHYVNPAVLRTAPQFQTVKGNGTWLVFLPVAPVETSS) lie on the Lumenal side of the membrane. Residues 235 to 255 (ISLLVVSFITALLSLAALLLL) form a helical membrane-spanning segment. Residues 256–430 (CHLLCFHIYL…QYLHFKQKMP (175 aa)) are Cytoplasmic-facing.

The protein belongs to the DHHC palmitoyltransferase family.

The protein resides in the endoplasmic reticulum membrane. The enzyme catalyses L-cysteinyl-[protein] + hexadecanoyl-CoA = S-hexadecanoyl-L-cysteinyl-[protein] + CoA. In terms of biological role, endoplasmic reticulum-localized palmitoyltransferase that could catalyze the addition of palmitate onto protein substrates. The protein is Palmitoyltransferase ZDHHC11 of Danio rerio (Zebrafish).